Consider the following 322-residue polypeptide: Apolipoprotein E (322 aa).

The signal sequence occupies residues 1-18; sequence MKVLWAALLVAFLAGCQG. 8 repeat units span residues 84-105, 106-127, 128-149, 150-171, 172-193, 194-215, 216-238, and 239-260. An 8 X 22 AA approximate tandem repeats region spans residues 84–260; sequence ALMDETMKEL…RLDEVKEQVE (177 aa). Met147 bears the Methionine sulfoxide mark. The residue at position 151 (Ser151) is a Phosphoserine. The LDL and other lipoprotein receptors binding stretch occupies residues 162 to 172; it reads HLRKLRKRLLR. 166 to 169 serves as a coordination point for heparin; sequence LRKR. The lipid-binding and lipoprotein association stretch occupies residues 214 to 295; it reads AATVGSSLAG…SWFEPLVEDM (82 aa). An O-linked (GalNAc...) threonine glycan is attached at Thr216. 234–241 is a binding site for heparin; the sequence is GERLRARM. Residues 271–322 form a homooligomerization region; sequence QQMRLQAEAFQARLKSWFEPLVEDMQRQWAGLVEKVQAAVGASAAPVPGDNH. The specificity for association with VLDL stretch occupies residues 283-295; the sequence is RLKSWFEPLVEDM.

It belongs to the apolipoprotein A1/A4/E family. Homotetramer. May interact with ABCA1; functionally associated with ABCA1 in the biogenesis of HDLs. May interact with APP/A4 amyloid-beta peptide; the interaction is extremely stable in vitro but its physiological significance is unclear. May interact with MAPT. May interact with MAP2. In the cerebrospinal fluid, interacts with secreted SORL1. Interacts with PMEL; this allows the loading of PMEL luminal fragment on ILVs to induce fibril nucleation. Post-translationally, APOE exists as multiple glycosylated and sialylated glycoforms within cells and in plasma. The extent of glycosylation and sialylation are tissue and context specific. Glycated in plasma VLDL. In terms of processing, phosphorylated by FAM20C in the extracellular medium.

It localises to the secreted. The protein resides in the extracellular space. The protein localises to the extracellular matrix. Its subcellular location is the extracellular vesicle. It is found in the endosome. It localises to the multivesicular body. Its function is as follows. APOE is an apolipoprotein, a protein associating with lipid particles, that mainly functions in lipoprotein-mediated lipid transport between organs via the plasma and interstitial fluids. APOE is a core component of plasma lipoproteins and is involved in their production, conversion and clearance. Apolipoproteins are amphipathic molecules that interact both with lipids of the lipoprotein particle core and the aqueous environment of the plasma. As such, APOE associates with chylomicrons, chylomicron remnants, very low density lipoproteins (VLDL) and intermediate density lipoproteins (IDL) but shows a preferential binding to high-density lipoproteins (HDL). It also binds a wide range of cellular receptors including the LDL receptor/LDLR, the LDL receptor-related proteins LRP1, LRP2 and LRP8 and the very low-density lipoprotein receptor/VLDLR that mediate the cellular uptake of the APOE-containing lipoprotein particles. Finally, APOE also has a heparin-binding activity and binds heparan-sulfate proteoglycans on the surface of cells, a property that supports the capture and the receptor-mediated uptake of APOE-containing lipoproteins by cells. A main function of APOE is to mediate lipoprotein clearance through the uptake of chylomicrons, VLDLs, and HDLs by hepatocytes. APOE is also involved in the biosynthesis by the liver of VLDLs as well as their uptake by peripheral tissues ensuring the delivery of triglycerides and energy storage in muscle, heart and adipose tissues. By participating in the lipoprotein-mediated distribution of lipids among tissues, APOE plays a critical role in plasma and tissues lipid homeostasis. APOE is also involved in two steps of reverse cholesterol transport, the HDLs-mediated transport of cholesterol from peripheral tissues to the liver, and thereby plays an important role in cholesterol homeostasis. First, it is functionally associated with ABCA1 in the biogenesis of HDLs in tissues. Second, it is enriched in circulating HDLs and mediates their uptake by hepatocytes. APOE also plays an important role in lipid transport in the central nervous system, regulating neuron survival and sprouting. This Ateles geoffroyi (Black-handed spider monkey) protein is Apolipoprotein E (APOE).